Reading from the N-terminus, the 141-residue chain is MAKKLVGSMKLQVPAGQANPSPPVGPALGQRGINIMEFCKAFNAKTADMEPGAPCPTVITYYQDKSFTMDIKTPPASYYLKKAAKIKSGANNPSRETAGTVTAAQVKEIAEAKMKDLNANDIEAAMQIILGSARSMGIEVK.

Belongs to the universal ribosomal protein uL11 family. Part of the ribosomal stalk of the 50S ribosomal subunit. Interacts with L10 and the large rRNA to form the base of the stalk. L10 forms an elongated spine to which L12 dimers bind in a sequential fashion forming a multimeric L10(L12)X complex. In terms of processing, one or more lysine residues are methylated.

Functionally, forms part of the ribosomal stalk which helps the ribosome interact with GTP-bound translation factors. This is Large ribosomal subunit protein uL11 from Ruegeria sp. (strain TM1040) (Silicibacter sp.).